Consider the following 410-residue polypeptide: Multifunctional CCA protein (410 aa).

ATP contacts are provided by Gly-8 and Arg-11. The CTP site is built by Gly-8 and Arg-11. Glu-21 and Asp-23 together coordinate Mg(2+). Residues Arg-91, Arg-137, and Arg-140 each coordinate ATP. Positions 91, 137, and 140 each coordinate CTP. Positions 228 to 329 (TLLHQFLCLK…WKLFKSLDIL (102 aa)) constitute an HD domain.

It belongs to the tRNA nucleotidyltransferase/poly(A) polymerase family. Bacterial CCA-adding enzyme type 1 subfamily. Monomer. Can also form homodimers and oligomers. It depends on Mg(2+) as a cofactor. The cofactor is Ni(2+).

It catalyses the reaction a tRNA precursor + 2 CTP + ATP = a tRNA with a 3' CCA end + 3 diphosphate. It carries out the reaction a tRNA with a 3' CCA end + 2 CTP + ATP = a tRNA with a 3' CCACCA end + 3 diphosphate. In terms of biological role, catalyzes the addition and repair of the essential 3'-terminal CCA sequence in tRNAs without using a nucleic acid template. Adds these three nucleotides in the order of C, C, and A to the tRNA nucleotide-73, using CTP and ATP as substrates and producing inorganic pyrophosphate. tRNA 3'-terminal CCA addition is required both for tRNA processing and repair. Also involved in tRNA surveillance by mediating tandem CCA addition to generate a CCACCA at the 3' terminus of unstable tRNAs. While stable tRNAs receive only 3'-terminal CCA, unstable tRNAs are marked with CCACCA and rapidly degraded. This chain is Multifunctional CCA protein, found in Alcanivorax borkumensis (strain ATCC 700651 / DSM 11573 / NCIMB 13689 / SK2).